A 202-amino-acid chain; its full sequence is Imidazoleglycerol-phosphate dehydratase (202 aa).

The protein belongs to the imidazoleglycerol-phosphate dehydratase family.

Its subcellular location is the cytoplasm. The catalysed reaction is D-erythro-1-(imidazol-4-yl)glycerol 3-phosphate = 3-(imidazol-4-yl)-2-oxopropyl phosphate + H2O. The protein operates within amino-acid biosynthesis; L-histidine biosynthesis; L-histidine from 5-phospho-alpha-D-ribose 1-diphosphate: step 6/9. The sequence is that of Imidazoleglycerol-phosphate dehydratase from Brucella anthropi (strain ATCC 49188 / DSM 6882 / CCUG 24695 / JCM 21032 / LMG 3331 / NBRC 15819 / NCTC 12168 / Alc 37) (Ochrobactrum anthropi).